A 563-amino-acid chain; its full sequence is Solute carrier family 22 member 6 (563 aa).

The Cytoplasmic portion of the chain corresponds to 1–9; the sequence is MAFNDLLQQ. The chain crosses the membrane as a helical span at residues 10–30; that stretch reads VGGVGRFQQIQVTLVVLPLLL. The Extracellular segment spans residues 31–135; sequence MASHNTLQNF…LVCSHRALRQ (105 aa). N-linked (GlcNAc...) asparagine glycosylation is found at asparagine 39, asparagine 56, asparagine 92, asparagine 97, and asparagine 113. Residues 136–156 traverse the membrane as a helical segment; that stretch reads LAQSLYMVGVLLGAMVFGYLA. Topologically, residues 157 to 164 are cytoplasmic; it reads DRLGRRKV. Residues 165–187 form a helical membrane-spanning segment; that stretch reads LILNYLQTAVSGTCAAFAPNFPI. The Extracellular segment spans residues 188 to 190; sequence YCA. The chain crosses the membrane as a helical span at residues 191–213; the sequence is FRLLSGMALAGISLNCMTLNVEW. Topologically, residues 214 to 224 are cytoplasmic; the sequence is MPIHTRACVGT. Residues 225 to 245 form a helical membrane-spanning segment; that stretch reads LIGYVYSLGQFLLAGVAYAVP. Residues 246–248 lie on the Extracellular side of the membrane; that stretch reads HWR. Residues 249–269 traverse the membrane as a helical segment; sequence HLQLLVSAPFFAFFIYSWFFI. Residues 270–337 are Cytoplasmic-facing; sequence ESARWHSSSG…ELLRCPTLRH (68 aa). Residues 338-358 traverse the membrane as a helical segment; that stretch reads LFLCLSMLWFATSFAYYGLVM. The Extracellular segment spans residues 359-368; sequence DLQGFGVSIY. A helical transmembrane segment spans residues 369–389; sequence LIQVIFGAVDLPAKLVGFLVI. The Cytoplasmic segment spans residues 390 to 395; sequence NSLGRR. The helical transmembrane segment at 396 to 416 threads the bilayer; sequence PAQMAALLLAGICILLNGVIP. Over 417–425 the chain is Extracellular; the sequence is QDQSIVRTS. Residues 426-446 traverse the membrane as a helical segment; the sequence is LAVLGKGCLAASFNCIFLYTG. At 447-455 the chain is on the cytoplasmic side; sequence ELYPTMIRQ. A helical transmembrane segment spans residues 456–475; sequence TGMGMGSTMARVGSIVSPLV. Residues 476 to 484 are Extracellular-facing; that stretch reads SMTAELYPS. The helical transmembrane segment at 485-505 threads the bilayer; that stretch reads MPLFIYGAVPVAASAVTVLLP. Residues 506–563 lie on the Cytoplasmic side of the membrane; that stretch reads ETLGQPLPDTVQDLESRWAPTQKEAGIYPRKGKQTRQQQEHQKYMVPLQASAQEKNGL. A disordered region spans residues 525–563; sequence PTQKEAGIYPRKGKQTRQQQEHQKYMVPLQASAQEKNGL.

This sequence belongs to the major facilitator (TC 2.A.1) superfamily. Organic cation transporter (TC 2.A.1.19) family. Post-translationally, glycosylated. Glycosylation at Asn-113 may occur at a secondary level. Glycosylation is necessary for proper targeting of the transporter to the plasma membrane. As to expression, strongly expressed in kidney. Expressed at lower level in liver, skeletal muscle, brain and placenta. In kidney, found at the basolateral membrane of the proximal tubule. In testis, primarily localized to the basal membrane of Sertoli cells and weakly expressed in Leydig cells and vascular endothelial cells.

It localises to the basolateral cell membrane. Its subcellular location is the basal cell membrane. The enzyme catalyses (6R)-L-erythro-5,6,7,8-tetrahydrobiopterin(out) + a dicarboxylate(in) = (6R)-L-erythro-5,6,7,8-tetrahydrobiopterin(in) + a dicarboxylate(out). It catalyses the reaction L-erythro-7,8-dihydrobiopterin(out) + a dicarboxylate(in) = L-erythro-7,8-dihydrobiopterin(in) + a dicarboxylate(out). It carries out the reaction L-sepiapterin(out) + a dicarboxylate(in) = L-sepiapterin(in) + a dicarboxylate(out). The catalysed reaction is prostaglandin F2alpha(out) + a dicarboxylate(in) = prostaglandin F2alpha(in) + a dicarboxylate(out). The enzyme catalyses prostaglandin E2(out) + a dicarboxylate(in) = prostaglandin E2(in) + a dicarboxylate(out). It catalyses the reaction 3',5'-cyclic AMP(out) + a dicarboxylate(in) = 3',5'-cyclic AMP(in) + a dicarboxylate(out). It carries out the reaction 3',5'-cyclic GMP(out) + a dicarboxylate(in) = 3',5'-cyclic GMP(in) + a dicarboxylate(out). The catalysed reaction is urate(out) + a dicarboxylate(in) = urate(in) + a dicarboxylate(out). The enzyme catalyses kynurenate(out) + glutarate(in) = kynurenate(in) + glutarate(out). It catalyses the reaction (indol-3-yl)acetate(out) + a dicarboxylate(in) = (indol-3-yl)acetate(in) + a dicarboxylate(out). It carries out the reaction indoxyl sulfate(out) + a dicarboxylate(in) = indoxyl sulfate(in) + a dicarboxylate(out). The catalysed reaction is N-benzoylglycine(out) + a dicarboxylate(in) = N-benzoylglycine(in) + a dicarboxylate(out). The enzyme catalyses 3-carboxy-4-methyl-5-propyl-2-furanpropanoate(out) + a dicarboxylate(in) = 3-carboxy-4-methyl-5-propyl-2-furanpropanoate(in) + a dicarboxylate(out). Functionally, secondary active transporter that functions as a Na(+)-independent organic anion (OA)/dicarboxylate antiporter where the uptake of one molecule of OA into the cell is coupled with an efflux of one molecule of intracellular dicarboxylate such as 2-oxoglutarate or glutarate. Mediates the uptake of OA across the basolateral side of proximal tubule epithelial cells, thereby contributing to the renal elimination of endogenous OA from the systemic circulation into the urine. Functions as a biopterin transporters involved in the uptake and the secretion of coenzymes tetrahydrobiopterin (BH4), dihydrobiopterin (BH2) and sepiapterin to urine, thereby determining baseline levels of blood biopterins. Transports prostaglandin E2 (PGE2) and prostaglandin F2-alpha (PGF2-alpha) and may contribute to their renal excretion. Also mediates the uptake of cyclic nucleotides such as cAMP and cGMP. Involved in the transport of neuroactive tryptophan metabolites kynurenate (KYNA) and xanthurenate (XA) and may contribute to their secretion from the brain. May transport glutamate. Also involved in the disposition of uremic toxins and potentially toxic xenobiotics by the renal organic anion secretory pathway, helping reduce their undesired toxicological effects on the body. Uremic toxins include the indoxyl sulfate (IS), hippurate/N-benzoylglycine (HA), indole acetate (IA), 3-carboxy-4- methyl-5-propyl-2-furanpropionate (CMPF) and urate. Xenobiotics include the mycotoxin ochratoxin (OTA). May also contribute to the transport of organic compounds in testes across the blood-testis-barrier. The sequence is that of Solute carrier family 22 member 6 from Homo sapiens (Human).